Consider the following 83-residue polypeptide: Exodeoxyribonuclease 7 small subunit (83 aa).

Positions 63-83 (VQNDDGTTGTEPLADTGESGR) are disordered.

Belongs to the XseB family. In terms of assembly, heterooligomer composed of large and small subunits.

Its subcellular location is the cytoplasm. The catalysed reaction is Exonucleolytic cleavage in either 5'- to 3'- or 3'- to 5'-direction to yield nucleoside 5'-phosphates.. Functionally, bidirectionally degrades single-stranded DNA into large acid-insoluble oligonucleotides, which are then degraded further into small acid-soluble oligonucleotides. This is Exodeoxyribonuclease 7 small subunit from Gluconobacter oxydans (strain 621H) (Gluconobacter suboxydans).